The primary structure comprises 187 residues: Peroxisome assembly protein 22 (187 aa).

The chain crosses the membrane as a helical span at residues 7–29 (NTFFGLAALGALGLGYSVYKSFI).

It belongs to the peroxin-22 family. As to quaternary structure, interacts with PEX4.

The protein localises to the peroxisome membrane. In terms of biological role, involved in peroxisome biogenesis. The polypeptide is Peroxisome assembly protein 22 (PEX22) (Komagataella pastoris (Yeast)).